The following is a 319-amino-acid chain: Cobalamin biosynthesis protein CobD (319 aa).

Transmembrane regions (helical) follow at residues 54–76 (VLLLLTVLLIVTALSLALVWLSY), 154–173 (GVTAPLFYALIGGAPLALLY), and 301–318 (VLGFLVFLFLLGGFIYAI).

Belongs to the CobD/CbiB family.

Its subcellular location is the cell membrane. The protein operates within cofactor biosynthesis; adenosylcobalamin biosynthesis. Converts cobyric acid to cobinamide by the addition of aminopropanol on the F carboxylic group. The chain is Cobalamin biosynthesis protein CobD from Halalkalibacterium halodurans (strain ATCC BAA-125 / DSM 18197 / FERM 7344 / JCM 9153 / C-125) (Bacillus halodurans).